Here is a 342-residue protein sequence, read N- to C-terminus: Putative TPR repeat-containing protein R856 (342 aa).

7 TPR repeats span residues 36–69 (VHIFNKAAIVFHRNGQHKKSLEMYEKAFGNIFNG), 77–110 (FYSVNGMASMYQALGDYDIAIKKYNSVIKIIKDM), 119–152 (VYALMGIASISQIKGNYDEALSKYNEALEINEKL), 161–194 (AFVLNRLGMLYHELDDNDKSIDHFNESLKIYREK), 203–236 (AFTISRLAQSLLKMGNDSEALEKYQESIDIFNKI), 245–278 (AFSLYGIGTVYEFRSEYSKALEKYQESLQTYKNV), and 291–324 (ASCLYKIGLVYKLSGNDNESTTYLNQANQMFEST).

This chain is Putative TPR repeat-containing protein R856, found in Acanthamoeba polyphaga mimivirus (APMV).